The chain runs to 73 residues: Antitoxin VapB20 (73 aa).

Its function is as follows. Antitoxin component of a type II toxin-antitoxin (TA) system. Upon expression in E.coli neutralizes the toxic effect of cognate toxin VapC20. The protein is Antitoxin VapB20 (vapB20) of Mycobacterium tuberculosis (strain ATCC 25618 / H37Rv).